The sequence spans 2292 residues: Protein Ycf2 (2292 aa).

1640 to 1647 is an ATP binding site; that stretch reads GSIGIGRS.

It belongs to the Ycf2 family.

The protein localises to the plastid. It localises to the chloroplast stroma. Its function is as follows. Probable ATPase of unknown function. Its presence in a non-photosynthetic plant (Epifagus virginiana) and experiments in tobacco indicate that it has an essential function which is probably not related to photosynthesis. This chain is Protein Ycf2, found in Liriodendron tulipifera (Tuliptree).